The sequence spans 467 residues: Glutamate--tRNA ligase (467 aa).

The 'HIGH' region motif lies at 9 to 19 (PSPTGFLHIGG). The short motif at 250-254 (KLSKR) is the 'KMSKS' region element. Lys-253 serves as a coordination point for ATP.

This sequence belongs to the class-I aminoacyl-tRNA synthetase family. Glutamate--tRNA ligase type 1 subfamily. In terms of assembly, monomer.

It localises to the cytoplasm. The catalysed reaction is tRNA(Glu) + L-glutamate + ATP = L-glutamyl-tRNA(Glu) + AMP + diphosphate. Catalyzes the attachment of glutamate to tRNA(Glu) in a two-step reaction: glutamate is first activated by ATP to form Glu-AMP and then transferred to the acceptor end of tRNA(Glu). The sequence is that of Glutamate--tRNA ligase from Mesomycoplasma hyopneumoniae (strain 7448) (Mycoplasma hyopneumoniae).